Consider the following 216-residue polypeptide: Probable GTP-binding protein EngB (216 aa).

The region spanning 37–214 is the EngB-type G domain; the sequence is AGLEVAFAGR…RAAMIKLIAE (178 aa). GTP contacts are provided by residues 45 to 52, 72 to 76, 92 to 95, 159 to 162, and 193 to 195; these read GRSNVGKS, GRTQE, DMPG, TKAD, and TSS. Residues serine 52 and threonine 74 each contribute to the Mg(2+) site.

The protein belongs to the TRAFAC class TrmE-Era-EngA-EngB-Septin-like GTPase superfamily. EngB GTPase family. Mg(2+) is required as a cofactor.

In terms of biological role, necessary for normal cell division and for the maintenance of normal septation. This Rhodopseudomonas palustris (strain BisB18) protein is Probable GTP-binding protein EngB.